The chain runs to 543 residues: Cytochrome P450 307a1 (543 aa).

Serine 219 carries the phosphoserine modification. The disordered stretch occupies residues 440 to 460; it reads FLEPSKEQSPKNSKGSDSGIE. The span at 449 to 460 shows a compositional bias: polar residues; sequence PKNSKGSDSGIE. Cysteine 485 serves as a coordination point for heme.

Belongs to the cytochrome P450 family. It depends on heme as a cofactor.

The protein localises to the endoplasmic reticulum membrane. It localises to the microsome membrane. Required for correct development of the embryonic midline glial cells which are necessary for the formation of distinct segmental commissures. This chain is Cytochrome P450 307a1 (spo), found in Drosophila melanogaster (Fruit fly).